Here is a 476-residue protein sequence, read N- to C-terminus: Chromosomal replication initiator protein DnaA (476 aa).

The tract at residues 1-87 (MSESSHVGLW…LMYNVLVDKS (87 aa)) is domain I, interacts with DnaA modulators. The segment at 87-130 (SSGATVNQESTTRSTAIPQSGLPRVDERKAPGLLRAPAVQDLDP) is domain II. Residues 131–348 (HLNPNYNFET…GIVISIMAHS (218 aa)) are domain III, AAA+ region. ATP-binding residues include glycine 176, glycine 178, lysine 179, and threonine 180. The interval 349-476 (TIYNKEIDLD…KKRNVSNGER (128 aa)) is domain IV, binds dsDNA.

This sequence belongs to the DnaA family. Oligomerizes as a right-handed, spiral filament on DNA at oriC.

It is found in the cytoplasm. Plays an essential role in the initiation and regulation of chromosomal replication. ATP-DnaA binds to the origin of replication (oriC) to initiate formation of the DNA replication initiation complex once per cell cycle. Binds the DnaA box (a 9 base pair repeat at the origin) and separates the double-stranded (ds)DNA. Forms a right-handed helical filament on oriC DNA; dsDNA binds to the exterior of the filament while single-stranded (ss)DNA is stabiized in the filament's interior. The ATP-DnaA-oriC complex binds and stabilizes one strand of the AT-rich DNA unwinding element (DUE), permitting loading of DNA polymerase. After initiation quickly degrades to an ADP-DnaA complex that is not apt for DNA replication. Binds acidic phospholipids. The protein is Chromosomal replication initiator protein DnaA of Bacteroides fragilis (strain YCH46).